The sequence spans 61 residues: Cobrotoxin-c (61 aa).

Disulfide bonds link cysteine 3/cysteine 23, cysteine 17/cysteine 40, cysteine 42/cysteine 53, and cysteine 54/cysteine 59.

Belongs to the three-finger toxin family. Short-chain subfamily. Type I alpha-neurotoxin sub-subfamily. As to expression, expressed by the venom gland.

The protein localises to the secreted. Functionally, produces peripheral paralysis by blocking neuromuscular transmission at the postsynaptic site. Binds to the nicotinic acetylcholine receptor. The polypeptide is Cobrotoxin-c (Naja kaouthia (Monocled cobra)).